A 323-amino-acid chain; its full sequence is Quinolinate synthase (323 aa).

2 residues coordinate iminosuccinate: His38 and Ser55. Cys100 lines the [4Fe-4S] cluster pocket. Residues 126-128 (YIN) and Ser143 contribute to the iminosuccinate site. Cys186 is a binding site for [4Fe-4S] cluster. Residues 212-214 (HPE) and Thr229 each bind iminosuccinate. Cys279 serves as a coordination point for [4Fe-4S] cluster.

Belongs to the quinolinate synthase family. Type 2 subfamily. The cofactor is [4Fe-4S] cluster.

The protein localises to the cytoplasm. The catalysed reaction is iminosuccinate + dihydroxyacetone phosphate = quinolinate + phosphate + 2 H2O + H(+). It participates in cofactor biosynthesis; NAD(+) biosynthesis; quinolinate from iminoaspartate: step 1/1. Functionally, catalyzes the condensation of iminoaspartate with dihydroxyacetone phosphate to form quinolinate. This is Quinolinate synthase from Gloeothece citriformis (strain PCC 7424) (Cyanothece sp. (strain PCC 7424)).